The sequence spans 517 residues: Splicing factor cactin (517 aa).

The segment covering 1-14 (MAFRDSTRDFNRSR) has biased composition (basic and acidic residues). The interval 1–59 (MAFRDSTRDFNRSRPEKRHASRSSSPRSFRPSNQNARANYNLPRVRDAMKEEERSRETK) is disordered. A compositionally biased stretch (low complexity) spans 22–32 (RSSSPRSFRPS). Basic and acidic residues predominate over residues 44 to 59 (RVRDAMKEEERSRETK).

This sequence belongs to the CACTIN family. In terms of assembly, interacts with sde2. Interacts with cdc5.

In terms of biological role, plays a role in pre-mRNA splicing by facilitating excision of introns featuring long spacing between the branchpoint and 3'-splice site (ss). Recruited to the spliceosome by sde2, which may enable folding of the RNA between the BP and 3'-ss to guide the splice site towards the spliceosome's catalytic center. Assists the splicing of several components involved in chromatin organization. This chain is Splicing factor cactin, found in Schizosaccharomyces pombe (strain 972 / ATCC 24843) (Fission yeast).